Consider the following 415-residue polypeptide: Lupus La protein homolog (415 aa).

Residues 7–99 (NEKMAALEAK…RRSPSRPLPE (93 aa)) enclose the HTH La-type RNA-binding domain. Residues serine 92 and serine 94 each carry the phosphoserine modification. An RRM domain is found at 111 to 187 (RSVYIKGFPT…TNLLILFKED (77 aa)). Lysine 116 is subject to N6-acetyllysine. Threonine 120 is modified (phosphothreonine). 2 positions are modified to N6-acetyllysine: lysine 128 and lysine 327. One can recognise a xRRM domain in the interval 226–343 (EGKMGCLLKF…HAARRFKGSH (118 aa)). Residues 323–415 (ESLNKWKSKG…KKRENGARDK (93 aa)) are disordered. Basic residues predominate over residues 328 to 341 (WKSKGGHAARRFKG). An N6-acetyllysine modification is found at lysine 356. Residue threonine 377 is modified to Phosphothreonine. The span at 377-415 (TRFDDDDHRRGPVKRGIDGRDREEPASKHKKRENGARDK) shows a compositional bias: basic and acidic residues.

Interacts with DDX15. May interact with RUFY1. Phosphorylated.

Its subcellular location is the nucleus. Binds to the 3' poly(U) terminus of nascent RNA polymerase III transcripts, protecting them from exonuclease digestion and facilitating their folding and maturation. The polypeptide is Lupus La protein homolog (Ssb) (Rattus norvegicus (Rat)).